The sequence spans 95 residues: Probable dolichol-phosphate mannosyltransferase subunit 3 (95 aa).

2 consecutive transmembrane segments (helical) span residues 10 to 30 (AHVI…VPVL) and 44 to 64 (APFF…VYGV).

The protein belongs to the DPM3 family.

The protein localises to the endoplasmic reticulum membrane. The protein operates within protein modification; protein glycosylation. Stabilizer subunit of the dolichol-phosphate-mannose synthase complex. In Caenorhabditis elegans, this protein is Probable dolichol-phosphate mannosyltransferase subunit 3 (dpm-3).